Consider the following 331-residue polypeptide: NADH-quinone oxidoreductase subunit H (331 aa).

The next 9 membrane-spanning stretches (helical) occupy residues 5–25, 45–65, 78–98, 122–142, 156–176, 192–212, 245–265, 271–291, and 311–331; these read LFFV…MASL, GPDM…IKLF, FIFL…LAPV, VLYI…AGLA, VVAL…VVMV, IFNW…MASF, FFIG…LLFL, FLFI…FFFF, and WKIL…ALLI.

Belongs to the complex I subunit 1 family. In terms of assembly, NDH-1 is composed of 14 different subunits. Subunits NuoA, H, J, K, L, M, N constitute the membrane sector of the complex.

It is found in the cell inner membrane. The catalysed reaction is a quinone + NADH + 5 H(+)(in) = a quinol + NAD(+) + 4 H(+)(out). NDH-1 shuttles electrons from NADH, via FMN and iron-sulfur (Fe-S) centers, to quinones in the respiratory chain. The immediate electron acceptor for the enzyme in this species is believed to be ubiquinone. Couples the redox reaction to proton translocation (for every two electrons transferred, four hydrogen ions are translocated across the cytoplasmic membrane), and thus conserves the redox energy in a proton gradient. This subunit may bind ubiquinone. This chain is NADH-quinone oxidoreductase subunit H, found in Campylobacter concisus (strain 13826).